A 312-amino-acid chain; its full sequence is Beta-ketoacyl-[acyl-carrier-protein] synthase III (312 aa).

Active-site residues include C112 and H237. The ACP-binding stretch occupies residues 238-242; sequence QANIR. The active site involves N267.

This sequence belongs to the thiolase-like superfamily. FabH family. Homodimer.

The protein localises to the cytoplasm. It carries out the reaction malonyl-[ACP] + acetyl-CoA + H(+) = 3-oxobutanoyl-[ACP] + CO2 + CoA. The protein operates within lipid metabolism; fatty acid biosynthesis. Its function is as follows. Catalyzes the condensation reaction of fatty acid synthesis by the addition to an acyl acceptor of two carbons from malonyl-ACP. Catalyzes the first condensation reaction which initiates fatty acid synthesis and may therefore play a role in governing the total rate of fatty acid production. Possesses both acetoacetyl-ACP synthase and acetyl transacylase activities. Its substrate specificity determines the biosynthesis of branched-chain and/or straight-chain of fatty acids. The polypeptide is Beta-ketoacyl-[acyl-carrier-protein] synthase III (Oceanobacillus iheyensis (strain DSM 14371 / CIP 107618 / JCM 11309 / KCTC 3954 / HTE831)).